Reading from the N-terminus, the 395-residue chain is Univin (395 aa).

The signal sequence occupies residues Met1–Ser19. The propeptide occupies Ala20–Arg272. Asn50 carries an N-linked (GlcNAc...) asparagine glycan. Residues Glu69–Leu97 form a disordered region. N-linked (GlcNAc...) asparagine glycans are attached at residues Asn116 and Asn336. 3 cysteine pairs are disulfide-bonded: Cys294–Cys360, Cys323–Cys392, and Cys327–Cys394.

The protein belongs to the TGF-beta family. In terms of assembly, homodimer; disulfide-linked.

The protein resides in the secreted. Could have a critical role in early developmental decisions in the sea urchin embryo. The sequence is that of Univin from Strongylocentrotus purpuratus (Purple sea urchin).